The chain runs to 272 residues: Transcription factor PU.1 (272 aa).

Positions 126–165 are disordered; sequence SPAHQQSSDEEEGERQSPPLEVSDGEADGLEPGPGLLHGE. Phosphoserine occurs at positions 142 and 148. Positions 155–165 are enriched in low complexity; sequence LEPGPGLLHGE. The segment at residues 172-255 is a DNA-binding region (ETS); it reads IRLYQFLLDL…VKKKLTYQFS (84 aa). DNA is bound by residues K219, R232, R235, and K245.

It belongs to the ETS family. As to quaternary structure, binds DNA as a monomer. Can form homomers. Directly interacts with CEBPD/NF-IL6-beta; this interaction does not affect DNA-binding properties of each partner. Interacts with NONO/p54(nrb). Interacts with RUNX1/AML1. Interacts with GFI1; the interaction represses SPI1 transcriptional activity, hence blocks SPI1-induced macrophage differentiation of myeloid progenitor cells. Interacts with CEBPE. Interacts with IRF4/Pip and IRF8. Interacts with JUN. Interacts with RB1. Interacts with TBP. In terms of tissue distribution, expressed in spleen, thymus and bone-marrow macrophages.

The protein resides in the nucleus. With respect to regulation, transcriptional activity at macrophage-specific genes is inhibited by interaction with GFI1, which results in inhibition of SPI1-induced macrophage differentiation of myeloid progenitor cells, but not that of the granulocyte lineage. Pioneer transcription factor, which controls hematopoietic cell fate by decompacting stem cell heterochromatin and allowing other transcription factors to enter otherwise inaccessible genomic sites. Once in open chromatin, can directly control gene expression by binding genetic regulatory elements and can also more broadly influence transcription by recruiting transcription factors, such as interferon regulatory factors (IRFs), to otherwise inaccessible genomic regions. Transcriptionally activates genes important for myeloid and lymphoid lineages, such as CSF1R. Transcriptional activation from certain promoters, possibly containing low affinity binding sites, is achieved cooperatively with other transcription factors. FCER1A transactivation is achieved in cooperation with GATA1. May be particularly important for the pro- to pre-B cell transition. Binds (via the ETS domain) onto the purine-rich DNA core sequence 5'-GAGGAA-3', also known as the PU-box. In vitro can bind RNA and interfere with pre-mRNA splicing. The chain is Transcription factor PU.1 (Spi1) from Mus musculus (Mouse).